Consider the following 755-residue polypeptide: Oligopeptide transporter 1 (755 aa).

Helical transmembrane passes span 58-78 (TWTLGLFSCILLAFVNQFFGF), 82-102 (QLWVSSVAAQIVTLPLGKLMA), 134-154 (ITIFANTGAGGVYATSIITIV), 165-185 (AAAMLLTQTTQLLGYGWAGIF), 226-246 (FFIIVFCVSFAYYIIPGYLFP), 298-318 (FFAIANFFGGFFIFLYIVLPI), 370-390 (YLSVMFALLYGLSFGSLCATI), 434-454 (WWFIAVLVISFAFALYACEGF), 462-482 (WWGLILACAIALFFTLPIGVI), 546-566 (FIVQLVATVVASTVCFGTTWW), 614-634 (GIYPGMNWFFLIGLLAPVPFW), 664-684 (AKAVHYWSWAIVGVVFNYYIF), and 697-717 (ILSAALDAGTAIMGVLIFFAF).

The protein belongs to the oligopeptide OPT transporter (TC 2.A.67.1) family. As to expression, highly expressed in flowers, and moderately expressed in leaves and stems.

It localises to the membrane. Involved in the translocation of tetra- and pentapeptides across the cellular membrane in an energy-dependent manner. The polypeptide is Oligopeptide transporter 1 (OPT1) (Arabidopsis thaliana (Mouse-ear cress)).